The primary structure comprises 371 residues: Polygalacturonase (371 aa).

A signal peptide spans 1–19 (MPSYLRNLVWATLAAGLVS). The propeptide occupies 20-34 (AAPTPSRVSDLTKKS). A disulfide bridge connects residues Cys38 and Cys53. PbH1 repeat units lie at residues 95–117 (GPLI…VINA), 165–195 (SDNL…DISE), 196–217 (STGV…AINS), 218–238 (GQNI…SIGS), 247–268 (VKNV…RIKT), 276–298 (VSDV…VIEQ), and 310–355 (TSGV…DITS). Asp210 serves as the catalytic Proton donor. Cys212 and Cys228 are joined by a disulfide. Residue His232 is part of the active site. The N-linked (GlcNAc...) asparagine glycan is linked to Asn249. 2 cysteine pairs are disulfide-bonded: Cys338-Cys343 and Cys362-Cys371.

This sequence belongs to the glycosyl hydrolase 28 family.

Its subcellular location is the secreted. It carries out the reaction (1,4-alpha-D-galacturonosyl)n+m + H2O = (1,4-alpha-D-galacturonosyl)n + (1,4-alpha-D-galacturonosyl)m.. The protein is Polygalacturonase of Penicillium janthinellum (Penicillium vitale).